The chain runs to 141 residues: Hemoglobin subunit alpha (141 aa).

The region spanning 1 to 141 (VLSPADKTNI…VSTVLVSKYR (141 aa)) is the Globin domain. Serine 3 bears the Phosphoserine mark. Lysine 7 carries the post-translational modification N6-succinyllysine. Residue threonine 8 is modified to Phosphothreonine. At lysine 11 the chain carries N6-succinyllysine. At lysine 16 the chain carries N6-acetyllysine; alternate. Lysine 16 carries the post-translational modification N6-succinyllysine; alternate. The residue at position 24 (tyrosine 24) is a Phosphotyrosine. Residue serine 35 is modified to Phosphoserine. Lysine 40 carries the post-translational modification N6-succinyllysine. At serine 49 the chain carries Phosphoserine. Histidine 58 is a binding site for O2. Histidine 87 provides a ligand contact to heme b. At serine 102 the chain carries Phosphoserine. Threonine 108 is modified (phosphothreonine). Residues serine 124 and serine 131 each carry the phosphoserine modification. The residue at position 134 (threonine 134) is a Phosphothreonine. Serine 138 carries the post-translational modification Phosphoserine.

Belongs to the globin family. As to quaternary structure, heterotetramer of two alpha chains and two beta chains. Red blood cells.

Its function is as follows. Involved in oxygen transport from the lung to the various peripheral tissues. Hemopressin acts as an antagonist peptide of the cannabinoid receptor CNR1. Hemopressin-binding efficiently blocks cannabinoid receptor CNR1 and subsequent signaling. In Myotis velifer (Mouse-eared bat), this protein is Hemoglobin subunit alpha (HBA).